A 98-amino-acid chain; its full sequence is Citrate lyase acyl carrier protein (98 aa).

Residue Ser-14 is modified to O-(phosphoribosyl dephospho-coenzyme A)serine.

This sequence belongs to the CitD family. In terms of assembly, oligomer with a subunit composition of (alpha,beta,gamma)6.

It localises to the cytoplasm. Functionally, covalent carrier of the coenzyme of citrate lyase. This Escherichia coli O127:H6 (strain E2348/69 / EPEC) protein is Citrate lyase acyl carrier protein.